The chain runs to 236 residues: 5'-methylthioadenosine/S-adenosylhomocysteine nucleosidase (236 aa).

Glu-12 functions as the Proton acceptor in the catalytic mechanism. Substrate contacts are provided by residues Gly-78, Ile-153, and 174 to 175 (ME). The Proton donor role is filled by Asp-198.

It belongs to the PNP/UDP phosphorylase family. MtnN subfamily.

The enzyme catalyses S-adenosyl-L-homocysteine + H2O = S-(5-deoxy-D-ribos-5-yl)-L-homocysteine + adenine. It catalyses the reaction S-methyl-5'-thioadenosine + H2O = 5-(methylsulfanyl)-D-ribose + adenine. The catalysed reaction is 5'-deoxyadenosine + H2O = 5-deoxy-D-ribose + adenine. It functions in the pathway amino-acid biosynthesis; L-methionine biosynthesis via salvage pathway; S-methyl-5-thio-alpha-D-ribose 1-phosphate from S-methyl-5'-thioadenosine (hydrolase route): step 1/2. Functionally, catalyzes the irreversible cleavage of the glycosidic bond in both 5'-methylthioadenosine (MTA) and S-adenosylhomocysteine (SAH/AdoHcy) to adenine and the corresponding thioribose, 5'-methylthioribose and S-ribosylhomocysteine, respectively. Also cleaves 5'-deoxyadenosine, a toxic by-product of radical S-adenosylmethionine (SAM) enzymes, into 5-deoxyribose and adenine. The sequence is that of 5'-methylthioadenosine/S-adenosylhomocysteine nucleosidase from Shewanella sp. (strain MR-7).